Here is a 289-residue protein sequence, read N- to C-terminus: tRNA pseudouridine synthase B (289 aa).

Catalysis depends on Asp38, which acts as the Nucleophile.

It belongs to the pseudouridine synthase TruB family. Type 1 subfamily.

It carries out the reaction uridine(55) in tRNA = pseudouridine(55) in tRNA. In terms of biological role, responsible for synthesis of pseudouridine from uracil-55 in the psi GC loop of transfer RNAs. The protein is tRNA pseudouridine synthase B of Clostridium acetobutylicum (strain ATCC 824 / DSM 792 / JCM 1419 / IAM 19013 / LMG 5710 / NBRC 13948 / NRRL B-527 / VKM B-1787 / 2291 / W).